A 197-amino-acid polypeptide reads, in one-letter code: Phospholipid hydroperoxide glutathione peroxidase (197 aa).

A Phosphoserine modification is found at Ser40. Sec73 is an active-site residue. Position 73 (Sec73) is a non-standard amino acid, selenocysteine.

The protein belongs to the glutathione peroxidase family. Monomer. Has a tendency to form higher mass oligomers. Interacts with FUNDC1; this interaction promotes GPX4 recruitment into mitochondria through TOM/TIM complex where it is degraded by mitophagy.

The protein resides in the mitochondrion. Its subcellular location is the cytoplasm. It carries out the reaction a hydroperoxy polyunsaturated fatty acid + 2 glutathione = a hydroxy polyunsaturated fatty acid + glutathione disulfide + H2O. The catalysed reaction is 2 glutathione + H2O2 = glutathione disulfide + 2 H2O. The enzyme catalyses tert-butyl hydroperoxide + 2 glutathione = tert-butanol + glutathione disulfide + H2O. It catalyses the reaction cumene hydroperoxide + 2 glutathione = 2-phenylpropan-2-ol + glutathione disulfide + H2O. It carries out the reaction (9S)-hydroperoxy-(10E,12Z)-octadecadienoate + 2 glutathione = (9S)-hydroxy-(10E,12Z)-octadecadienoate + glutathione disulfide + H2O. The catalysed reaction is (13S)-hydroperoxy-(9Z,11E)-octadecadienoate + 2 glutathione = (13S)-hydroxy-(9Z,11E)-octadecadienoate + glutathione disulfide + H2O. The enzyme catalyses (5S)-hydroperoxy-(6E,8Z,11Z,14Z)-eicosatetraenoate + 2 glutathione = (5S)-hydroxy-(6E,8Z,11Z,14Z)-eicosatetraenoate + glutathione disulfide + H2O. It catalyses the reaction (12R)-hydroperoxy-(5Z,8Z,10E,14Z)-eicosatetraenoate + 2 glutathione = (12R)-hydroxy-(5Z,8Z,10E,14Z)-eicosatetraenoate + glutathione disulfide + H2O. It carries out the reaction (12S)-hydroperoxy-(5Z,8Z,10E,14Z)-eicosatetraenoate + 2 glutathione = (12S)-hydroxy-(5Z,8Z,10E,14Z)-eicosatetraenoate + glutathione disulfide + H2O. The catalysed reaction is (15S)-hydroperoxy-(5Z,8Z,11Z,13E)-eicosatetraenoate + 2 glutathione = (15S)-hydroxy-(5Z,8Z,11Z,13E)-eicosatetraenoate + glutathione disulfide + H2O. The enzyme catalyses (5S)-hydroperoxy-(6E,8Z,11Z,14Z,17Z)-eicosapentaenoate + 2 glutathione = (5S)-hydroxy-(6E,8Z,11Z,14Z,17Z)-eicosapentaenoate + glutathione disulfide + H2O. It catalyses the reaction (12S)-hydroperoxy-(5Z,8Z,10E,14Z,17Z)-eicosapentaenoate + 2 glutathione = (12S)-hydroxy-(5Z,8Z,10E,14Z,17Z)-eicosapentaenoate + glutathione disulfide + H2O. It carries out the reaction (15S)-hydroperoxy-(5Z,8Z,11Z,13E,17Z)-eicosapentaenoate + 2 glutathione = (15S)-hydroxy-(5Z,8Z,11Z,13E,17Z)-eicosapentaenoate + glutathione disulfide + H2O. The catalysed reaction is (15S)-hydroperoxy-(11Z,13E)-eicosadienoate + 2 glutathione = (15S)-hydroxy-(11Z,13E)-eicosadienoate + glutathione disulfide + H2O. The enzyme catalyses (17S)-hydroperoxy-(4Z,7Z,10Z,13Z,15E,19Z)-docosahexaenoate + 2 glutathione = (17S)-hydroxy-(4Z,7Z,10Z,13Z,15E,19Z)-docosahexaenoate + glutathione disulfide + H2O. It catalyses the reaction a hydroperoxy-1,2-diacyl-glycero-3-phosphocholine + 2 glutathione = a hydroxy-1,2-diacyl-glycero-3-phosphocholine + glutathione disulfide + H2O. Functionally, essential antioxidant peroxidase that directly reduces phospholipid hydroperoxide even if they are incorporated in membranes and lipoproteins. Can also reduce fatty acid hydroperoxide, cholesterol hydroperoxide and thymine hydroperoxide. Plays a key role in protecting cells from oxidative damage by preventing membrane lipid peroxidation. Required to prevent cells from ferroptosis, a non-apoptotic cell death resulting from an iron-dependent accumulation of lipid reactive oxygen species. The presence of selenocysteine (Sec) versus Cys at the active site is essential for life: it provides resistance to overoxidation and prevents cells against ferroptosis. The presence of Sec at the active site is also essential for the survival of a specific type of parvalbumin-positive interneurons, thereby preventing against fatal epileptic seizures. May be required to protect cells from the toxicity of ingested lipid hydroperoxides. Required for normal sperm development and male fertility. Essential for maturation and survival of photoreceptor cells. Plays a role in a primary T-cell response to viral and parasitic infection by protecting T-cells from ferroptosis and by supporting T-cell expansion. Plays a role of glutathione peroxidase in platelets in the arachidonic acid metabolism. Reduces hydroperoxy ester lipids formed by a 15-lipoxygenase that may play a role as down-regulator of the cellular 15-lipoxygenase pathway. Can also reduce small soluble hydroperoxides such as H2O2, cumene hydroperoxide and tert-butyl hydroperoxide. The sequence is that of Phospholipid hydroperoxide glutathione peroxidase from Bos taurus (Bovine).